Reading from the N-terminus, the 473-residue chain is Glutamate--tRNA ligase (473 aa).

Positions 11-21 (PSPTGFLHIGG) match the 'HIGH' region motif. The 'KMSKS' region motif lies at 240–244 (KLSKR). Lysine 243 is an ATP binding site.

Belongs to the class-I aminoacyl-tRNA synthetase family. Glutamate--tRNA ligase type 1 subfamily. In terms of assembly, monomer.

It localises to the cytoplasm. The catalysed reaction is tRNA(Glu) + L-glutamate + ATP = L-glutamyl-tRNA(Glu) + AMP + diphosphate. In terms of biological role, catalyzes the attachment of glutamate to tRNA(Glu) in a two-step reaction: glutamate is first activated by ATP to form Glu-AMP and then transferred to the acceptor end of tRNA(Glu). This is Glutamate--tRNA ligase from Rhodopseudomonas palustris (strain BisB5).